Here is a 434-residue protein sequence, read N- to C-terminus: Purple acid phosphatase 22 (434 aa).

The first 22 residues, 1–22 (MKLFGLFLSFTLLFLCPFISQA), serve as a signal peptide directing secretion. N116 carries N-linked (GlcNAc...) asparagine glycosylation. Positions 148, 175, and 178 each coordinate Fe cation. D175 lines the Zn(2+) pocket. The Zn(2+) site is built by N208 and H292. A substrate-binding site is contributed by N208. H302 functions as the Proton donor in the catalytic mechanism. H329 contributes to the Zn(2+) binding site. 329-331 (HVH) contributes to the substrate binding site. Residue H331 coordinates Fe cation. N403 is a glycosylation site (N-linked (GlcNAc...) asparagine).

This sequence belongs to the metallophosphoesterase superfamily. Purple acid phosphatase family. As to quaternary structure, homodimer. Fe cation serves as cofactor. The cofactor is Zn(2+). As to expression, expressed in roots, stems, leaves, flowers and siliques.

It localises to the secreted. It catalyses the reaction a phosphate monoester + H2O = an alcohol + phosphate. This is Purple acid phosphatase 22 (PAP22) from Arabidopsis thaliana (Mouse-ear cress).